The following is a 96-amino-acid chain: MEQAPEDQGPQREPYNEWTLELLEELKSEAVRHFPRIWLHSLEQYIYETYGDTWEGVEAIIRILQQLLFIHFRIGCQHSRIGITRQRRARNGASRS.

Positions 1 to 42 (MEQAPEDQGPQREPYNEWTLELLEELKSEAVRHFPRIWLHSL) are homooligomerization. Phosphoserine; by host is present on residues S79, S94, and S96.

Belongs to the HIV-1 VPR protein family. Homooligomer, may form homodimer. Interacts with p6-gag region of the Pr55 Gag precursor protein through a (Leu-X-X)4 motif near the C-terminus of the P6gag protein. Interacts with host UNG. May interact with host RAD23A/HHR23A. Interacts with host VPRBP/DCAF1, leading to hijack the CUL4A-RBX1-DDB1-DCAF1/VPRBP complex, mediating ubiquitination of host proteins such as TERT and ZGPAT and arrest of the cell cycle in G2 phase. Post-translationally, phosphorylated on several residues by host. These phosphorylations regulate VPR activity for the nuclear import of the HIV-1 pre-integration complex.

Its subcellular location is the virion. It localises to the host nucleus. The protein resides in the host extracellular space. Its function is as follows. During virus replication, may deplete host UNG protein, and incude G2-M cell cycle arrest. Acts by targeting specific host proteins for degradation by the 26S proteasome, through association with the cellular CUL4A-DDB1 E3 ligase complex by direct interaction with host VPRPB/DCAF-1. Cell cycle arrest reportedly occurs within hours of infection and is not blocked by antiviral agents, suggesting that it is initiated by the VPR carried into the virion. Additionally, VPR induces apoptosis in a cell cycle dependent manner suggesting that these two effects are mechanistically linked. Detected in the serum and cerebrospinal fluid of AIDS patient, VPR may also induce cell death to bystander cells. Functionally, during virus entry, plays a role in the transport of the viral pre-integration (PIC) complex to the host nucleus. This function is crucial for viral infection of non-dividing macrophages. May act directly at the nuclear pore complex, by binding nucleoporins phenylalanine-glycine (FG)-repeat regions. This chain is Protein Vpr, found in Homo sapiens (Human).